The chain runs to 226 residues: Aspartyl protease inhibitor (226 aa).

An N-terminal signal peptide occupies residues 1–15 (MKLLFLCALIALTAA). Disordered regions lie at residues 95-116 (GKKGKAVETSSEELPKAPKKPS) and 196-218 (EAKQTTTTEAPELPEEAPEQPNV). A disulfide bridge links Cys131 with Cys222.

Belongs to the protease inhibitor I33 family.

It is found in the secreted. In terms of biological role, aspartyl protease inhibitor. The chain is Aspartyl protease inhibitor from Parelaphostrongylus tenuis (Meningeal worm).